The primary structure comprises 152 residues: Interleukin-2 (152 aa).

The first 20 residues, 1–20 (MYRMQLLSCIALTLALVANG), serve as a signal peptide directing secretion. An O-linked (GalNAc...) threonine glycan is attached at threonine 23. Cysteine 78 and cysteine 126 form a disulfide bridge.

This sequence belongs to the IL-2 family.

The protein localises to the secreted. In terms of biological role, cytokine produced by activated CD4-positive helper T-cells and to a lesser extend activated CD8-positive T-cells and natural killer (NK) cells that plays pivotal roles in the immune response and tolerance. Binds to a receptor complex composed of either the high-affinity trimeric IL-2R (IL2RA/CD25, IL2RB/CD122 and IL2RG/CD132) or the low-affinity dimeric IL-2R (IL2RB and IL2RG). Interaction with the receptor leads to oligomerization and conformation changes in the IL-2R subunits resulting in downstream signaling starting with phosphorylation of JAK1 and JAK3. In turn, JAK1 and JAK3 phosphorylate the receptor to form a docking site leading to the phosphorylation of several substrates including STAT5. This process leads to activation of several pathways including STAT, phosphoinositide-3-kinase/PI3K and mitogen-activated protein kinase/MAPK pathways. Functions as a T-cell growth factor and can increase NK-cell cytolytic activity as well. Promotes strong proliferation of activated B-cells and subsequently immunoglobulin production. Plays a pivotal role in regulating the adaptive immune system by controlling the survival and proliferation of regulatory T-cells, which are required for the maintenance of immune tolerance. Moreover, participates in the differentiation and homeostasis of effector T-cell subsets, including Th1, Th2, Th17 as well as memory CD8-positive T-cells. The protein is Interleukin-2 (IL2) of Orcinus orca (Killer whale).